The following is a 192-amino-acid chain: Adenylate kinase (192 aa).

Position 10–18 (10–18 (GVPGVGGTT)) interacts with ATP.

Belongs to the archaeal adenylate kinase family. Monomer.

The protein localises to the cytoplasm. The enzyme catalyses AMP + ATP = 2 ADP. The polypeptide is Adenylate kinase (Methanococcus maripaludis (strain C5 / ATCC BAA-1333)).